The sequence spans 584 residues: Extracellular serine/threonine protein kinase FAM20C (584 aa).

At 1-10 the chain is on the cytoplasmic side; sequence MKMMLVRRFR. The propeptide occupies 1–92; sequence MKMMLVRRFR…PNKHTLRILQ (92 aa). The chain crosses the membrane as a helical; Signal-anchor for type II membrane protein span at residues 11–31; the sequence is VLILMVFLVACALHIALDLLP. At 32-584 the chain is on the lumenal side; sequence RLERRGARPS…DTEHRAASAR (553 aa). Disordered stretches follow at residues 62–81 and 94–159; these read QVRG…GDAG and FSSD…GDAS. Low complexity-rich tracts occupy residues 71–81 and 95–112; these read PAASSAAGDAG and SSDP…KLPP. An N-linked (GlcNAc...) asparagine glycan is attached at Asn101. Position 106 is a phosphoserine (Ser106). The segment covering 116-149 has biased composition (basic and acidic residues); it reads PAERALRGRDPGALRPHDPAHRPLLRDPGPRRSE. Gln269, Lys285, and Glu306 together coordinate ATP. Glu306 contributes to the Mn(2+) binding site. Residue Asn335 is glycosylated (N-linked (GlcNAc...) asparagine). The interval 354-565 is kinase domain; the sequence is FISPANNICF…AVRDCVERNG (212 aa). Disulfide bonds link Cys362–Cys378 and Cys367–Cys371. Position 389–392 (389–392) interacts with ATP; the sequence is AAFL. 2 cysteine pairs are disulfide-bonded: Cys426-Cys500 and Cys501-Cys560. Asp458 is an active-site residue. Residue Glu463 coordinates ATP. Asn470 is a glycosylation site (N-linked (GlcNAc...) asparagine). Residue Asp478 coordinates ATP. Asp478 is a Mn(2+) binding site.

Belongs to the FAM20 family. As to quaternary structure, homodimer; disulfide-linked. Interacts with FAM20A; probably forming a heterotetramer of 2 subunits of FAM20A and 2 subunits of FAM20C. Interacts with protease MBTPS1/S1P; the interaction results in FAM20C cleavage and secretion. Interacts with COPII components SEC23A and SEC24A; transport of FAM20C from the endoplasmic reticulum to the Golgi is likely to be mediated by COPII vesicles. Mn(2+) serves as cofactor. In terms of processing, N-glycosylation is required for folding. Autophosphorylated. Post-translationally, propeptide cleavage by MBTPS1/S1P promotes FAM20C secretion and maximal kinase activity which is essential for efficient osteoblast differentiation and biomineralization. In terms of tissue distribution, widely expressed.

Its subcellular location is the golgi apparatus membrane. The protein resides in the secreted. It localises to the endoplasmic reticulum. The catalysed reaction is L-seryl-[protein] + ATP = O-phospho-L-seryl-[protein] + ADP + H(+). It catalyses the reaction L-threonyl-[protein] + ATP = O-phospho-L-threonyl-[protein] + ADP + H(+). Serine/threonine protein kinase activity is increased upon interaction with FAM20A. Its function is as follows. Golgi serine/threonine protein kinase that phosphorylates secretory pathway proteins within Ser-x-Glu/pSer motifs and plays a key role in biomineralization of bones and teeth. Constitutes the main protein kinase for extracellular proteins, generating the majority of the extracellular phosphoproteome. Mainly phosphorylates proteins within the Ser-x-Glu/pSer motif, but also displays a broader substrate specificity. Phosphorylates ERO1A, enhancing its activity which is required to maintain endoplasmic reticulum redox homeostasis and for oxidative protein folding. During endoplasmic reticulum stress, phosphorylates P4HB/PDIA1 which induces a functional switch, causing P4HB to change from an oxidoreductase to a molecular chaperone. This is critical to maintain ER proteostasis and reduce cell death under ER stress. Phosphorylation of P4HB also promotes its interaction with ERN1, leading to reduced activity of ERN1, a key sensor for the endoplasmic reticulum unfolded protein response. Required for osteoblast differentiation and mineralization. Phosphorylates casein as well as a number of proteins involved in biomineralization such as AMELX, AMTN, ENAM and SPP1/OPN. In addition to its role in biomineralization, also plays a role in lipid homeostasis, wound healing and cell migration and adhesion. This chain is Extracellular serine/threonine protein kinase FAM20C, found in Homo sapiens (Human).